Consider the following 101-residue polypeptide: Small ribosomal subunit protein uS14 (101 aa).

This sequence belongs to the universal ribosomal protein uS14 family. In terms of assembly, part of the 30S ribosomal subunit. Contacts proteins S3 and S10.

Binds 16S rRNA, required for the assembly of 30S particles and may also be responsible for determining the conformation of the 16S rRNA at the A site. The protein is Small ribosomal subunit protein uS14 of Shewanella denitrificans (strain OS217 / ATCC BAA-1090 / DSM 15013).